Reading from the N-terminus, the 239-residue chain is Small ribosomal subunit protein uS2 (239 aa).

It belongs to the universal ribosomal protein uS2 family.

The sequence is that of Small ribosomal subunit protein uS2 from Francisella tularensis subsp. novicida (strain U112).